A 458-amino-acid chain; its full sequence is UDP-N-acetylglucosamine 1-carboxyvinyltransferase (458 aa).

Position 22–23 (22–23) interacts with phosphoenolpyruvate; the sequence is KN. Arg-94 is a UDP-N-acetyl-alpha-D-glucosamine binding site. Asp-119 serves as the catalytic Proton donor. The UDP-N-acetyl-alpha-D-glucosamine site is built by Asp-309 and Val-331.

It belongs to the EPSP synthase family. MurA subfamily.

It is found in the cytoplasm. It catalyses the reaction phosphoenolpyruvate + UDP-N-acetyl-alpha-D-glucosamine = UDP-N-acetyl-3-O-(1-carboxyvinyl)-alpha-D-glucosamine + phosphate. Its pathway is cell wall biogenesis; peptidoglycan biosynthesis. Its function is as follows. Cell wall formation. Adds enolpyruvyl to UDP-N-acetylglucosamine. The sequence is that of UDP-N-acetylglucosamine 1-carboxyvinyltransferase from Chlamydia pneumoniae (Chlamydophila pneumoniae).